Here is a 224-residue protein sequence, read N- to C-terminus: Heme response regulator HssR (224 aa).

The Response regulatory domain occupies 3–116; sequence QCLVVDDDPR…ELIFRIRAVL (114 aa). Asp-52 is subject to 4-aspartylphosphate. The segment at residues 124-222 is a DNA-binding region (ompR/PhoB-type); sequence NSEMTIGNLT…VRGQGYKVEN (99 aa).

Phosphorylated by HssS.

It localises to the cytoplasm. In terms of biological role, member of the two-component regulatory system HssS/HssR involved in intracellular heme homeostasis and tempering of staphylococcal virulence. Phosphorylated HssR binds to a direct repeat sequence within hrtAB promoter and activates the expression of hrtAB, an efflux pump, in response to extracellular heme, hemin, hemoglobin or blood. The protein is Heme response regulator HssR (hssR) of Staphylococcus aureus (strain Mu50 / ATCC 700699).